The chain runs to 54 residues: MHVISDECVKCGACASTCPTGAIEEGETKYVVTDSCIDCGACEAVCPTGAISAE.

4Fe-4S ferredoxin-type domains are found at residues 2-28 (HVIS…EGET) and 29-54 (KYVV…ISAE). 8 residues coordinate [4Fe-4S] cluster: Cys-8, Cys-11, Cys-14, Cys-18, Cys-36, Cys-39, Cys-42, and Cys-46.

Requires [4Fe-4S] cluster as cofactor.

Ferredoxins are iron-sulfur proteins that transfer electrons in a wide variety of metabolic reactions. The chain is Ferredoxin from Megasphaera elsdenii.